Consider the following 90-residue polypeptide: Phosphocarrier protein NPr (90 aa).

Residues 2 to 90 (TQYRRVAIKN…ALFESGFDED (89 aa)) enclose the HPr domain. The Pros-phosphohistidine intermediate role is filled by histidine 16.

The protein belongs to the HPr family.

Its subcellular location is the cytoplasm. Component of the phosphoenolpyruvate-dependent nitrogen-metabolic phosphotransferase system (nitrogen-metabolic PTS), that seems to be involved in regulating nitrogen metabolism. The phosphoryl group from phosphoenolpyruvate (PEP) is transferred to the phosphoryl carrier protein NPr by enzyme I-Ntr. Phospho-NPr then transfers it to EIIA-Ntr. Could function in the transcriptional regulation of sigma-54 dependent operons in conjunction with the NPr (PtsO) and EIIA-Ntr (PtsN) proteins. The sequence is that of Phosphocarrier protein NPr (ptsO) from Proteus mirabilis (strain HI4320).